The following is a 434-amino-acid chain: 3-ketoacyl-CoA thiolase A, peroxisomal (434 aa).

The N-terminal 36 residues, Met-1–Cys-36, are a transit peptide targeting the peroxisome. The segment at Met-11–Cys-36 is PTS2-type peroxisomal targeting signal. The active-site Acyl-thioester intermediate is Cys-133. 2 positions are modified to N6-acetyllysine: Lys-183 and Lys-244. Active-site proton acceptor residues include His-387 and Cys-418.

It belongs to the thiolase-like superfamily. Thiolase family. Homodimer. Interacts (via PTS2-type peroxisomal targeting signal region) with PEX7; leading to its translocation into peroxisomes.

Its subcellular location is the peroxisome. The catalysed reaction is an acyl-CoA + acetyl-CoA = a 3-oxoacyl-CoA + CoA. It carries out the reaction 2 acetyl-CoA = acetoacetyl-CoA + CoA. It catalyses the reaction tetradecanoyl-CoA + acetyl-CoA = 3-oxohexadecanoyl-CoA + CoA. The enzyme catalyses hexanoyl-CoA + acetyl-CoA = 3-oxooctanoyl-CoA + CoA. The catalysed reaction is 3-oxohexadecanedioyl-CoA + CoA = tetradecanedioyl-CoA + acetyl-CoA. It carries out the reaction 3-oxo-(6Z,9Z,12Z,15Z,18Z,21Z)-tetracosahexaenoyl-CoA + CoA = (4Z,7Z,10Z,13Z,16Z,19Z)-docosahexaenoyl-CoA + acetyl-CoA. The protein operates within lipid metabolism; peroxisomal fatty acid beta-oxidation. In terms of biological role, responsible for the thiolytic cleavage of straight chain 3-keto fatty acyl-CoAs (3-oxoacyl-CoAs). Plays an important role in fatty acid peroxisomal beta-oxidation. Catalyzes the cleavage of short, medium, long, and very long straight chain 3-oxoacyl-CoAs. Medium chain straight 3-oxoacyl-CoAs are preferred substrates. This chain is 3-ketoacyl-CoA thiolase A, peroxisomal, found in Rattus norvegicus (Rat).